The following is a 540-amino-acid chain: PTS system alpha-glucoside-specific EIICB component (540 aa).

Positions 1 to 420 constitute a PTS EIIC type-1 domain; sequence MLSQIQRFGG…LNLKTPGREE (420 aa). The next 11 membrane-spanning stretches (helical) occupy residues 12-32, 87-107, 130-150, 174-194, 201-221, 225-245, 277-297, 307-327, 329-349, 352-372, and 384-404; these read MFTP…AIML, ACLA…AMGM, IAGI…SGLV, FVVI…LLGW, IESL…VYIF, ILIP…GPAV, FALH…ALYF, VAGL…TEPL, FTFL…AATM, VMYI…QFLP, and SMMF…FVVF. The 83-residue stretch at 448 to 530 folds into the PTS EIIB type-1 domain; the sequence is LGQAAGFLQA…ENLMKDSLST (83 aa). Cysteine 470 (phosphocysteine intermediate; for EIIB activity) is an active-site residue.

It is found in the cell membrane. Functionally, the phosphoenolpyruvate-dependent sugar phosphotransferase system (sugar PTS), a major carbohydrate active -transport system, catalyzes the phosphorylation of incoming sugar substrates concomitantly with their translocation across the cell membrane. This system is involved in alpha-glucoside transport. In terms of biological role, involved in the transport and simultaneous phosphorylation at O-6 of the glucosyl moiety of sucrose and its five linkage-isomeric alpha-D-glucosyl-D-fructoses. Can also transport maltose, isomaltose and maltitol, phosphorylating at O-6 of their non-reducing glucose portion. This Klebsiella pneumoniae protein is PTS system alpha-glucoside-specific EIICB component (aglA).